Reading from the N-terminus, the 611-residue chain is Procollagen galactosyltransferase 1-B (611 aa).

The first 24 residues, 1 to 24 (MSQAGVERLLKGLQILVLVLRLSA), serve as a signal peptide directing secretion. 5 N-linked (GlcNAc...) asparagine glycosylation sites follow: asparagine 85, asparagine 173, asparagine 370, asparagine 373, and asparagine 568. Residues 576–591 (DRAKSRKTHQQEKLRS) show a composition bias toward basic and acidic residues. The interval 576-611 (DRAKSRKTHQQEKLRSEALNTPSMGSPFDNTARDEL) is disordered. Positions 608 to 611 (RDEL) match the Prevents secretion from ER motif.

It belongs to the glycosyltransferase 25 family.

The protein resides in the endoplasmic reticulum lumen. It catalyses the reaction (5R)-5-hydroxy-L-lysyl-[collagen] + UDP-alpha-D-galactose = (5R)-5-O-(beta-D-galactosyl)-5-hydroxy-L-lysyl-[collagen] + UDP + H(+). In terms of biological role, beta-galactosyltransferase that transfers beta-galactose to hydroxylysine residues of type I collagen. By acting on collagen glycosylation, facilitates the formation of collagen triple helix. This Xenopus laevis (African clawed frog) protein is Procollagen galactosyltransferase 1-B (colgalt1-b).